A 410-amino-acid chain; its full sequence is Peptidase T (410 aa).

Histidine 79 provides a ligand contact to Zn(2+). Aspartate 81 is an active-site residue. A Zn(2+)-binding site is contributed by aspartate 142. Glutamate 176 functions as the Proton acceptor in the catalytic mechanism. Zn(2+) contacts are provided by glutamate 177, aspartate 199, and histidine 381.

This sequence belongs to the peptidase M20B family. It depends on Zn(2+) as a cofactor.

It is found in the cytoplasm. The catalysed reaction is Release of the N-terminal residue from a tripeptide.. Its function is as follows. Cleaves the N-terminal amino acid of tripeptides. This chain is Peptidase T, found in Bacillus thuringiensis subsp. konkukian (strain 97-27).